Reading from the N-terminus, the 475-residue chain is E3 ubiquitin-protein ligase TRIM21 (475 aa).

The segment at 16–55 (CPICLDPFVEPVSIECGHSFCQECISQVGKGGGSVCPVCR) adopts an RING-type zinc-finger fold. Zn(2+)-binding residues include Cys92, His95, Cys114, and His120. The B box-type zinc-finger motif lies at 92–123 (CAVHGERLHLFCEKDGKALCWVCAQSRKHRDH). The stretch at 128–238 (LEEAAQEYQE…ISELDRRCHS (111 aa)) forms a coiled coil. Ser266 carries the post-translational modification Phosphoserine. In terms of domain architecture, B30.2/SPRY spans 268–465 (ELRSVCHVPG…NTAPLTLCPL (198 aa)).

Belongs to the TRIM/RBCC family. Homotrimer. Interacts (via C-terminus) with IRF8 (via C-terminus). Component of a SCF(SKP2)-like complex containing CUL1, SKP1, TRIM21 and SKP2. Interacts with CALR, CUL1, FBXW11, HSPA5, IKBKB, IRF3, SKP1 and VCP. Interacts with SKP2; the interaction with SKP2 does not depend on an intact F-box domain. Interacts (via N-terminus and C-terminus) with DCP2 (via N-terminus and C-terminus). Interacts with ULK1, BECN1 and with ATG8 family members, including GABARAP, GABARAPL1, GABARAPL2 and MAP1LC3C/LC3C. Interacts with TRIM21 and SQSTM1/sequestosome 1. Interacts with IRF3. Interacts (via the SPRY domain) with NMI (via coiled-coil domain); the interaction promotes 'Lys-63'-linked ubiquitination of NMI. Interacts with IFI35 and NMI; the interaction facilitates NMI-IFI35 complex formation. As to quaternary structure, (Microbial infection) Interacts (via B30.2/SPRY domain) with severe fever with thrombocytopenia syndrome virus (SFTSV) NSs; this interaction activates NFE2L2-mediated transcriptional activation of antioxidant genes. Post-translationally, autoubiquitinated; does not lead to its proteasomal degradation. Deubiquitinated by USP4; leading to its stabilization. In terms of tissue distribution, isoform 1 and isoform 2 are expressed in fetal and adult heart and fetal lung.

It is found in the cytoplasm. It localises to the cytoplasmic vesicle. Its subcellular location is the autophagosome. The protein localises to the nucleus. The protein resides in the P-body. It is found in the stress granule. It carries out the reaction S-ubiquitinyl-[E2 ubiquitin-conjugating enzyme]-L-cysteine + [acceptor protein]-L-lysine = [E2 ubiquitin-conjugating enzyme]-L-cysteine + N(6)-ubiquitinyl-[acceptor protein]-L-lysine.. It participates in protein modification; protein ubiquitination. Functionally, E3 ubiquitin-protein ligase whose activity is dependent on E2 enzymes, UBE2D1, UBE2D2, UBE2E1 and UBE2E2. Forms a ubiquitin ligase complex in cooperation with the E2 UBE2D2 that is used not only for the ubiquitination of USP4 and IKBKB but also for its self-ubiquitination. Component of cullin-RING-based SCF (SKP1-CUL1-F-box protein) E3 ubiquitin-protein ligase complexes such as SCF(SKP2)-like complexes. A TRIM21-containing SCF(SKP2)-like complex is shown to mediate ubiquitination of CDKN1B ('Thr-187' phosphorylated-form), thereby promoting its degradation by the proteasome. Monoubiquitinates IKBKB that will negatively regulates Tax-induced NF-kappa-B signaling. Negatively regulates IFN-beta production post-pathogen recognition by catalyzing polyubiquitin-mediated degradation of IRF3. Mediates the ubiquitin-mediated proteasomal degradation of IgG1 heavy chain, which is linked to the VCP-mediated ER-associated degradation (ERAD) pathway. Promotes IRF8 ubiquitination, which enhanced the ability of IRF8 to stimulate cytokine genes transcription in macrophages. Plays a role in the regulation of the cell cycle progression. Enhances the decapping activity of DCP2. Exists as a ribonucleoprotein particle present in all mammalian cells studied and composed of a single polypeptide and one of four small RNA molecules. At least two isoforms are present in nucleated and red blood cells, and tissue specific differences in RO/SSA proteins have been identified. The common feature of these proteins is their ability to bind HY RNAs.2. Involved in the regulation of innate immunity and the inflammatory response in response to IFNG/IFN-gamma. Organizes autophagic machinery by serving as a platform for the assembly of ULK1, Beclin 1/BECN1 and ATG8 family members and recognizes specific autophagy targets, thus coordinating target recognition with assembly of the autophagic apparatus and initiation of autophagy. Also regulates autophagy through FIP200/RB1CC1 ubiquitination and subsequent decreased protein stability. Represses the innate antiviral response by facilitating the formation of the NMI-IFI35 complex through 'Lys-63'-linked ubiquitination of NMI. During viral infection, promotes cell pyroptosis by mediating 'Lys-6'-linked ubiquitination of ISG12a/IFI27, facilitating its translocation into the mitochondria and subsequent CASP3 activation. When up-regulated through the IFN/JAK/STAT signaling pathway, promotes 'Lys-27'-linked ubiquitination of MAVS, leading to the recruitment of TBK1 and up-regulation of innate immunity. Mediates 'Lys-63'-linked polyubiquitination of G3BP1 in response to heat shock, leading to stress granule disassembly. In Homo sapiens (Human), this protein is E3 ubiquitin-protein ligase TRIM21.